A 469-amino-acid chain; its full sequence is Uronate isomerase (469 aa).

Belongs to the metallo-dependent hydrolases superfamily. Uronate isomerase family.

It carries out the reaction D-glucuronate = D-fructuronate. The catalysed reaction is aldehydo-D-galacturonate = keto-D-tagaturonate. It functions in the pathway carbohydrate metabolism; pentose and glucuronate interconversion. The protein is Uronate isomerase of Edwardsiella ictaluri (strain 93-146).